Here is a 236-residue protein sequence, read N- to C-terminus: Oligogalacturonate-specific porin KdgM (236 aa).

The signal sequence occupies residues 1 to 20 (MKIKLLTLAVASLVSVNALA).

Belongs to the oligogalacturonate-specific porin KdgM (TC 1.B.35) family. As to quaternary structure, monomer.

It localises to the cell outer membrane. Porin specific for oligogalacturonides. Also required for full virulence. The sequence is that of Oligogalacturonate-specific porin KdgM (kdgM) from Dickeya dadantii (strain 3937) (Erwinia chrysanthemi (strain 3937)).